The sequence spans 409 residues: Toluene 1,2-dioxygenase system ferredoxin--NAD(+) reductase component (409 aa).

Residue 4 to 35 coordinates FAD; that stretch reads HVAIIGNGVGGFTTAQALRAEGFEGRISLIGD. Residue 145–173 coordinates NAD(+); the sequence is RLLIVGGGLIGCEVATTARKLGLSVTILE.

It belongs to the bacterial ring-hydroxylating dioxygenase ferredoxin reductase family. As to quaternary structure, this dioxygenase system consists of four proteins: the two subunits of the hydroxylase component (todC1 and todC2), a ferredoxin (TodB) and a ferredoxin reductase (TodA). It depends on FAD as a cofactor.

It carries out the reaction 2 reduced [2Fe-2S]-[ferredoxin] + NAD(+) + H(+) = 2 oxidized [2Fe-2S]-[ferredoxin] + NADH. The protein operates within xenobiotic degradation; toluene degradation. Its function is as follows. Part of the electron transfer component of toluene 1,2-dioxygenase, transfers electrons from ferredoxin (TodB) to NADH. The polypeptide is Toluene 1,2-dioxygenase system ferredoxin--NAD(+) reductase component (todA) (Pseudomonas putida (Arthrobacter siderocapsulatus)).